The chain runs to 397 residues: Acetate kinase (397 aa).

Asparagine 8 is a binding site for Mg(2+). ATP is bound at residue lysine 15. Arginine 89 contributes to the substrate binding site. Catalysis depends on aspartate 146, which acts as the Proton donor/acceptor. ATP-binding positions include 206-210 (HLGNG), 281-283 (DLR), and 329-333 (GVGEN). Position 382 (glutamate 382) interacts with Mg(2+).

Belongs to the acetokinase family. In terms of assembly, homodimer. Mg(2+) is required as a cofactor. The cofactor is Mn(2+).

It localises to the cytoplasm. The enzyme catalyses acetate + ATP = acetyl phosphate + ADP. Its pathway is metabolic intermediate biosynthesis; acetyl-CoA biosynthesis; acetyl-CoA from acetate: step 1/2. Its function is as follows. Catalyzes the formation of acetyl phosphate from acetate and ATP. Can also catalyze the reverse reaction. The sequence is that of Acetate kinase from Bacillus cereus (strain ATCC 14579 / DSM 31 / CCUG 7414 / JCM 2152 / NBRC 15305 / NCIMB 9373 / NCTC 2599 / NRRL B-3711).